Consider the following 445-residue polypeptide: MGITILKNEGLDFHARISTPLSEIDDDIQKELLDLTKKVKIAGFRVGKVPVSIVKKKYGTSVRNDIIERRINHSVNHVIKEHNLNIIGRPTIEELQNESDKALEFTVKMELLPKITIPDLKKISLDRPKLEVNSKDVEEQLEKLAALTKNYTKESKAKIKDGDQVTIDAIGYIKEKAFEDGKLNDFKVIIGSNALIPGFEKQLIGSKTGSEVDVNVTFPENYHAKDLAGKDARFVVQIKAVHTAEPTVIDDEFAKKFQSNSLEELRTHFTKQIENESEEAINTIMKMNLFDKLEKLLDFDVPESLLEQEKNILKSGTDKNEQDESLLKDKSSKEITAYYNKLALRRVRIGLLLAEYAKSKNLQLEPDDLRKVIMQQARNFPGQENMIFDFYKNNPRAIEGLKGPALEDKAVQYIFNHEIKLKEKKYTKEELEKYLEAEEQRITLI.

The PPIase FKBP-type domain maps to 162–247; it reads GDQVTIDAIG…IKAVHTAEPT (86 aa).

Belongs to the FKBP-type PPIase family. Tig subfamily.

The protein localises to the cytoplasm. The enzyme catalyses [protein]-peptidylproline (omega=180) = [protein]-peptidylproline (omega=0). Involved in protein export. Acts as a chaperone by maintaining the newly synthesized protein in an open conformation. Functions as a peptidyl-prolyl cis-trans isomerase. The chain is Trigger factor from Rickettsia africae (strain ESF-5).